The primary structure comprises 221 residues: Lipoprotein-releasing system ATP-binding protein LolD (221 aa).

The region spanning 6-220 (LTLKNVSKHY…YKLKHGALNM (215 aa)) is the ABC transporter domain. Residue 42-49 (GSSGSGKS) participates in ATP binding.

It belongs to the ABC transporter superfamily. Lipoprotein translocase (TC 3.A.1.125) family. The complex is composed of two ATP-binding proteins (LolD) and two transmembrane proteins (LolC and LolE).

It localises to the cell inner membrane. Functionally, part of the ABC transporter complex LolCDE involved in the translocation of mature outer membrane-directed lipoproteins, from the inner membrane to the periplasmic chaperone, LolA. Responsible for the formation of the LolA-lipoprotein complex in an ATP-dependent manner. This chain is Lipoprotein-releasing system ATP-binding protein LolD, found in Rickettsia bellii (strain RML369-C).